The sequence spans 859 residues: Active breakpoint cluster region-related protein (859 aa).

A disordered region spans residues 27-84; it reads DDYDAEGNEEQKGPPEGSETMPYIDESPTMSPQLSARSQGGGDSISPTPPEGLAPGVE. A compositionally biased stretch (polar residues) spans 54-64; the sequence is PTMSPQLSARS. Serine 57 carries the post-translational modification Phosphoserine. The DH domain occupies 91-284; it reads MRKLVLSGFL…QNFLSSINED (194 aa). One can recognise a PH domain in the interval 301–459; sequence QLVKDGFLVE…WREAIQKLQK (159 aa). In terms of domain architecture, C2 spans 484–613; the sequence is TVHNIPVTSN…ETKNWHTDVI (130 aa). The 199-residue stretch at 647–845 folds into the Rho-GAP domain; it reads VKISVVTKRE…YYLQHPPISF (199 aa).

As to quaternary structure, interacts with DLG4.

It localises to the cell projection. The protein resides in the dendritic spine. Its subcellular location is the axon. The protein localises to the synapse. In terms of biological role, protein with a unique structure having two opposing regulatory activities toward small GTP-binding proteins. The C-terminus is a GTPase-activating protein domain which stimulates GTP hydrolysis by RAC1, RAC2 and CDC42. Accelerates the intrinsic rate of GTP hydrolysis of RAC1 or CDC42, leading to down-regulation of the active GTP-bound form. The central Dbl homology (DH) domain functions as guanine nucleotide exchange factor (GEF) that modulates the GTPases CDC42, RHOA and RAC1. Promotes the conversion of CDC42, RHOA and RAC1 from the GDP-bound to the GTP-bound form. Functions as an important negative regulator of neuronal RAC1 activity. Regulates macrophage functions such as CSF1-directed motility and phagocytosis through the modulation of RAC1 activity. This Bos taurus (Bovine) protein is Active breakpoint cluster region-related protein (ABR).